The following is a 216-amino-acid chain: Phosphorylated carbohydrates phosphatase TM_1254 (216 aa).

Catalysis depends on Asp-7, which acts as the Nucleophile.

Belongs to the HAD-like hydrolase superfamily. Co(2+) is required as a cofactor. It depends on Mg(2+) as a cofactor. Mn(2+) serves as cofactor. The cofactor is Ni(2+).

Displays high phosphatase activity toward erythrose 4-phosphate, fructose 6-phosphate, 2-deoxyglucose 6-phosphate, and mannose 6-phosphate. May have a role in the intracellular metabolism of many phosphorylated carbohydrates. In Thermotoga maritima (strain ATCC 43589 / DSM 3109 / JCM 10099 / NBRC 100826 / MSB8), this protein is Phosphorylated carbohydrates phosphatase TM_1254.